A 364-amino-acid chain; its full sequence is Mannose-1-phosphate guanyltransferase (364 aa).

It belongs to the transferase hexapeptide repeat family.

The protein resides in the cytoplasm. The enzyme catalyses alpha-D-mannose 1-phosphate + GTP + H(+) = GDP-alpha-D-mannose + diphosphate. It participates in nucleotide-sugar biosynthesis; GDP-alpha-D-mannose biosynthesis; GDP-alpha-D-mannose from alpha-D-mannose 1-phosphate (GTP route): step 1/1. Its function is as follows. Involved in cell wall synthesis where it is required for glycosylation. Involved in cell cycle progression through cell-size checkpoint. The protein is Mannose-1-phosphate guanyltransferase (MPG1) of Cryptococcus neoformans var. neoformans serotype D (strain B-3501A) (Filobasidiella neoformans).